The following is a 388-amino-acid chain: Succinyl-diaminopimelate desuccinylase (388 aa).

His-72 serves as a coordination point for Zn(2+). Asp-74 is an active-site residue. Asp-105 serves as a coordination point for Zn(2+). Glu-139 acts as the Proton acceptor in catalysis. Glu-140, Glu-168, and His-353 together coordinate Zn(2+).

The protein belongs to the peptidase M20A family. DapE subfamily. Homodimer. Requires Zn(2+) as cofactor. It depends on Co(2+) as a cofactor.

The enzyme catalyses N-succinyl-(2S,6S)-2,6-diaminopimelate + H2O = (2S,6S)-2,6-diaminopimelate + succinate. The protein operates within amino-acid biosynthesis; L-lysine biosynthesis via DAP pathway; LL-2,6-diaminopimelate from (S)-tetrahydrodipicolinate (succinylase route): step 3/3. Catalyzes the hydrolysis of N-succinyl-L,L-diaminopimelic acid (SDAP), forming succinate and LL-2,6-diaminopimelate (DAP), an intermediate involved in the bacterial biosynthesis of lysine and meso-diaminopimelic acid, an essential component of bacterial cell walls. The sequence is that of Succinyl-diaminopimelate desuccinylase from Orientia tsutsugamushi (strain Ikeda) (Rickettsia tsutsugamushi).